The primary structure comprises 488 residues: Histone deacetylase 2 (488 aa).

Residues 9 to 322 (KKKVCYYYDG…WTYETAVALD (314 aa)) are histone deacetylase. Gly28 and Lys32 together coordinate 1D-myo-inositol 1,4,5,6-tetrakisphosphate. N6-acetyllysine; alternate is present on Lys75. A Glycyl lysine isopeptide (Lys-Gly) (interchain with G-Cter in SUMO2); alternate cross-link involves residue Lys75. The active site involves His142. Asp175, Asp177, His179, Phe188, Thr191, Val194, Ser198, and Phe199 together coordinate Ca(2+). Asp177 and His179 together coordinate Zn(2+). N6-acetyllysine is present on Lys221. Tyr223 is a binding site for Ca(2+). At Cys262 the chain carries S-nitrosocysteine. Asp265 provides a ligand contact to Zn(2+). Arg271 is a 1D-myo-inositol 1,4,5,6-tetrakisphosphate binding site. Cys274 bears the S-nitrosocysteine mark. Residues 389-488 (AVHEDSGDED…GAKSEQLSNP (100 aa)) are disordered. A phosphoserine mark is found at Ser394, Ser407, Ser422, and Ser424. Residues 402-417 (PDKRISIRASDKRIAC) are compositionally biased toward basic and acidic residues. Positions 418–428 (DEEFSDSEDEG) are enriched in acidic residues. The span at 429-481 (EGGRRNVADHKKGAKKARIEEDKKETEDKKTDVKEEDKSKDNSGEKTDPKGAK) shows a compositional bias: basic and acidic residues. Glycyl lysine isopeptide (Lys-Gly) (interchain with G-Cter in SUMO2) cross-links involve residues Lys439, Lys452, Lys458, Lys462, Lys478, and Lys481.

Belongs to the histone deacetylase family. HD type 1 subfamily. Part of the core histone deacetylase (HDAC) complex composed of HDAC1, HDAC2, RBBP4 and RBBP7, the core complex associates with SIN3, SAP18 and SAP30 to form the SIN3 HDAC complex. Component of the nucleosome remodeling and deacetylase (NuRD) repressor complex, composed of core proteins MTA1, MTA2, MTA3, RBBP4, RBBP7, HDAC1, HDAC2, MBD2, MBD3, and peripherally associated proteins CDK2AP1, CDK2AP2, GATAD2A, GATAD2B, CHD3, CHD4 and CHD5. The exact stoichiometry of the NuRD complex is unknown, and some subunits such as MBD2 and MBD3, GATAD2A and GATAD2B, and CHD3, CHD4 and CHD5 define mutually exclusive NuRD complexes. Component of a RCOR/GFI/KDM1A/HDAC complex. Component of a BHC histone deacetylase complex that contains HDAC1, HDAC2, HMG20B, KDM1A, RCOR1 and PHF21A. The BHC complex may also contain ZMYM2, ZNF217, ZMYM3, GSE1 and GTF2I. Part of a complex containing the core histones H2A, H2B, H3 and H4, DEK and unphosphorylated DAXX. Part of a complex containing ATR and CHD4. Forms a heterologous complex at least with YY1. Interacts in the late S-phase of DNA-replication with DNMT1 in the other transcriptional repressor complex composed of DNMT1, DMAP1, PCNA, CAF1. Component of a mSin3A corepressor complex that contains SIN3A, SAP130, SUDS3, ARID4B, HDAC1 and HDAC2. Part of a complex composed of TRIM28, HDAC1, HDAC2 and EHMT2. Part of a complex containing at least CDYL, MIER1, MIER2, HDAC1 and HDAC2. Component of a histone deacetylase complex containing DNTTIP1, ZNF541, HDAC1 and HDAC2. Forms a complex comprising APPL1, RUVBL2, APPL2, CTNNB1 and HDAC1. Interacts directly with GFI1. Interacts directly with GFI1B. Interacts with APEX1; the interaction is not dependent on the acetylated status of APEX1. Interacts with ATR. Interacts with BCL6 (non-acetylated form). Interacts with BEND3. Interacts with CBFA2T3. Interacts with CDK2AP1. Interacts with CHD4. Interacts with CHD5. Interacts with CHFR. Interacts with CRY1. Interacts with DNMT1. Interacts with GATAD2A. Interacts with HCFC1. Interacts with HDAC7. Interacts with HDAC10. Interacts with INSM1. Interacts with KDM4A. Interacts with MACROH2A1 (via the non-histone region). Interacts with MBD3L2. Interacts with MTA1, with a preference for sumoylated MTA1. Interacts with NACC2. Interacts with NRIP1. Interacts with PELP1. Interacts with PIMREG. Interacts with PRDM6. Interacts with PWWP2B Interacts with SAP30. Interacts with SAP30L. Interacts with SETDB1. Interacts with SIX3. Interacts with SMARCAD1. Interacts with SNW1. Interacts with SPHK2. Interacts with SPEN/MINT. Interacts (CK2 phosphorylated form) with SP3. Interacts with SUV39H1. Interacts with TSHZ3 (via its N-terminus). Interacts with ZMYND8. Interacts with ZNF431. Interacts with ZNF263; recruited to the SIX3 promoter along with other proteins involved in chromatin modification and transcriptional corepression where it contributes to transcriptional repression. Identified in a complex with HDAC1, KCTD19, DNTTIP1 and ZNF541. Component of the SIN3B complex, which includes SIN3B, HDAC2, PHF12 and MORF4L1; interacts directly with all subunits. Zn(2+) serves as cofactor. The cofactor is Ca(2+). In terms of processing, S-nitrosylated by GAPDH. In neurons, S-nitrosylation at Cys-262 and Cys-274 does not affect enzyme activity, but induces HDAC2 release from chromatin. This in turn increases acetylation of histones surrounding neurotrophin-dependent gene promoters and promotes their transcription. In embryonic cortical neurons, S-Nitrosylation regulates dendritic growth and branching.

It is found in the nucleus. The protein localises to the cytoplasm. The enzyme catalyses N(6)-acetyl-L-lysyl-[histone] + H2O = L-lysyl-[histone] + acetate. It catalyses the reaction N(6)-acetyl-L-lysyl-[protein] + H2O = L-lysyl-[protein] + acetate. It carries out the reaction N(6)-(2E)-butenoyl-L-lysyl-[protein] + H2O = (2E)-2-butenoate + L-lysyl-[protein]. The catalysed reaction is N(6)-(2-hydroxyisobutanoyl)-L-lysyl-[protein] + H2O = 2-hydroxy-2-methylpropanoate + L-lysyl-[protein]. The enzyme catalyses N(6)-[(S)-lactoyl]-L-lysyl-[protein] + H2O = (S)-lactate + L-lysyl-[protein]. Its activity is regulated as follows. Inositol tetraphosphate (1D-myo-inositol 1,4,5,6-tetrakisphosphate) may act as an intermolecular glue between HDAC2 and N-Cor repressor complex components. Its function is as follows. Histone deacetylase that catalyzes the deacetylation of lysine residues on the N-terminal part of the core histones (H2A, H2B, H3 and H4). Histone deacetylation gives a tag for epigenetic repression and plays an important role in transcriptional regulation, cell cycle progression and developmental events. Histone deacetylases act via the formation of large multiprotein complexes. Forms transcriptional repressor complexes by associating with MAD, SIN3, YY1 and N-COR. Component of a RCOR/GFI/KDM1A/HDAC complex that suppresses, via histone deacetylase (HDAC) recruitment, a number of genes implicated in multilineage blood cell development. Acts as a component of the histone deacetylase NuRD complex which participates in the remodeling of chromatin. Component of the SIN3B complex that represses transcription and counteracts the histone acetyltransferase activity of EP300 through the recognition H3K27ac marks by PHF12 and the activity of the histone deacetylase HDAC2. Also deacetylates non-histone targets: deacetylates TSHZ3, thereby regulating its transcriptional repressor activity. May be involved in the transcriptional repression of circadian target genes, such as PER1, mediated by CRY1 through histone deacetylation. Involved in MTA1-mediated transcriptional corepression of TFF1 and CDKN1A. In addition to protein deacetylase activity, also acts as a protein-lysine deacylase by recognizing other acyl groups: catalyzes removal of (2E)-butenoyl (crotonyl), lactoyl (lactyl) and 2-hydroxyisobutanoyl (2-hydroxyisobutyryl) acyl groups from lysine residues, leading to protein decrotonylation, delactylation and de-2-hydroxyisobutyrylation, respectively. The protein is Histone deacetylase 2 of Mus musculus (Mouse).